Consider the following 447-residue polypeptide: Probable glycine dehydrogenase (decarboxylating) subunit 1 (447 aa).

This sequence belongs to the GcvP family. N-terminal subunit subfamily. In terms of assembly, the glycine cleavage system is composed of four proteins: P, T, L and H. In this organism, the P 'protein' is a heterodimer of two subunits.

The catalysed reaction is N(6)-[(R)-lipoyl]-L-lysyl-[glycine-cleavage complex H protein] + glycine + H(+) = N(6)-[(R)-S(8)-aminomethyldihydrolipoyl]-L-lysyl-[glycine-cleavage complex H protein] + CO2. The glycine cleavage system catalyzes the degradation of glycine. The P protein binds the alpha-amino group of glycine through its pyridoxal phosphate cofactor; CO(2) is released and the remaining methylamine moiety is then transferred to the lipoamide cofactor of the H protein. This is Probable glycine dehydrogenase (decarboxylating) subunit 1 from Beijerinckia indica subsp. indica (strain ATCC 9039 / DSM 1715 / NCIMB 8712).